We begin with the raw amino-acid sequence, 510 residues long: Amidophosphoribosyltransferase (510 aa).

C2 (nucleophile) is an active-site residue. In terms of domain architecture, Glutamine amidotransferase type-2 spans 2 to 239 (CGILGIALAD…PGEAVIIPKD (238 aa)). Positions 373 and 374 each coordinate Mg(2+).

It in the C-terminal section; belongs to the purine/pyrimidine phosphoribosyltransferase family. It depends on Mg(2+) as a cofactor.

The enzyme catalyses 5-phospho-beta-D-ribosylamine + L-glutamate + diphosphate = 5-phospho-alpha-D-ribose 1-diphosphate + L-glutamine + H2O. It participates in purine metabolism; IMP biosynthesis via de novo pathway; N(1)-(5-phospho-D-ribosyl)glycinamide from 5-phospho-alpha-D-ribose 1-diphosphate: step 1/2. In Lachancea kluyveri (Yeast), this protein is Amidophosphoribosyltransferase (ADE4).